A 70-amino-acid polypeptide reads, in one-letter code: Movement protein TGBp3 (70 aa).

Residues 1-4 (MEVN) lie on the Lumenal side of the membrane. A helical transmembrane segment spans residues 5–27 (TYLNAIILVLVVTIIAVISTSLV). The Cytoplasmic portion of the chain corresponds to 28–70 (RTEPCVIKITGESITVLACKLDAETIKAIADLKPLSVERLSFH).

This sequence belongs to the Tymovirales TGBp3 protein family.

Its subcellular location is the host endoplasmic reticulum membrane. Plays a role in viral cell-to-cell propagation, by facilitating genome transport to neighboring plant cells through plasmosdesmata. May induce the formation of granular vesicles derived from the endoplasmic reticulum, which align on actin filaments. This Brassica campestris (Field mustard) protein is Movement protein TGBp3.